The primary structure comprises 446 residues: Eukaryotic translation initiation factor 3 subunit E (446 aa).

The PCI domain maps to 240-420; that stretch reads PLFNDENSRE…GTVVMNHPNS (181 aa).

This sequence belongs to the eIF-3 subunit E family. In terms of assembly, component of the eukaryotic translation initiation factor 3 (eIF-3) complex.

It is found in the cytoplasm. Component of the eukaryotic translation initiation factor 3 (eIF-3) complex, which is involved in protein synthesis of a specialized repertoire of mRNAs and, together with other initiation factors, stimulates binding of mRNA and methionyl-tRNAi to the 40S ribosome. The eIF-3 complex specifically targets and initiates translation of a subset of mRNAs involved in cell proliferation. The protein is Eukaryotic translation initiation factor 3 subunit E of Pyricularia oryzae (strain 70-15 / ATCC MYA-4617 / FGSC 8958) (Rice blast fungus).